A 1359-amino-acid chain; its full sequence is DNA-directed RNA polymerase subunit beta (1359 aa).

The protein belongs to the RNA polymerase beta chain family. The RNAP catalytic core consists of 2 alpha, 1 beta, 1 beta' and 1 omega subunit. When a sigma factor is associated with the core the holoenzyme is formed, which can initiate transcription.

It carries out the reaction RNA(n) + a ribonucleoside 5'-triphosphate = RNA(n+1) + diphosphate. Its function is as follows. DNA-dependent RNA polymerase catalyzes the transcription of DNA into RNA using the four ribonucleoside triphosphates as substrates. The sequence is that of DNA-directed RNA polymerase subunit beta from Nitrosomonas eutropha (strain DSM 101675 / C91 / Nm57).